The sequence spans 103 residues: Large ribosomal subunit protein bL21 (103 aa).

The protein belongs to the bacterial ribosomal protein bL21 family. In terms of assembly, part of the 50S ribosomal subunit. Contacts protein L20.

In terms of biological role, this protein binds to 23S rRNA in the presence of protein L20. This is Large ribosomal subunit protein bL21 from Saccharophagus degradans (strain 2-40 / ATCC 43961 / DSM 17024).